The following is a 353-amino-acid chain: S-adenosylmethionine:tRNA ribosyltransferase-isomerase (353 aa).

Belongs to the QueA family. Monomer.

It localises to the cytoplasm. The catalysed reaction is 7-aminomethyl-7-carbaguanosine(34) in tRNA + S-adenosyl-L-methionine = epoxyqueuosine(34) in tRNA + adenine + L-methionine + 2 H(+). It functions in the pathway tRNA modification; tRNA-queuosine biosynthesis. In terms of biological role, transfers and isomerizes the ribose moiety from AdoMet to the 7-aminomethyl group of 7-deazaguanine (preQ1-tRNA) to give epoxyqueuosine (oQ-tRNA). This chain is S-adenosylmethionine:tRNA ribosyltransferase-isomerase, found in Rickettsia bellii (strain OSU 85-389).